Consider the following 137-residue polypeptide: Histone H2B (137 aa).

Residues 1–10 show a composition bias toward basic and acidic residues; that stretch reads MAPKAADKKP. The tract at residues 1 to 46 is disordered; the sequence is MAPKAADKKPASKAPATASKAPEKKDAGKKTAASGDKKKRSKSRKE. N6-acetyllysine; alternate is present on residues Lys-8 and Lys-9. Glycyl lysine isopeptide (Lys-Gly) (interchain with G-Cter in SUMO); alternate cross-links involve residues Lys-8 and Lys-9. Ser-12 is subject to Phosphoserine. The residue at position 13 (Lys-13) is an N6-acetyllysine. Lys-24 carries the N6-acetyllysine; alternate modification. Lys-24 participates in a covalent cross-link: Glycyl lysine isopeptide (Lys-Gly) (interchain with G-Cter in SUMO); alternate. Lys-25 is covalently cross-linked (Glycyl lysine isopeptide (Lys-Gly) (interchain with G-Cter in SUMO)). A Glycyl lysine isopeptide (Lys-Gly) (interchain with G-Cter in ubiquitin) cross-link involves residue Lys-131.

It belongs to the histone H2B family. In terms of assembly, the nucleosome is a histone octamer containing two molecules each of H2A, H2B, H3 and H4 assembled in one H3-H4 heterotetramer and two H2A-H2B heterodimers. The octamer wraps approximately 147 bp of DNA. Monoubiquitinated by the UBC2-BRE1 complex to form H2BK123ub1. H2BK123ub1 gives a specific tag for epigenetic transcriptional activation and is also prerequisite for H3K4me and H3K79me formation. H2BK123ub1 also modulates the formation of double-strand breaks during meiosis and is a prerequisite for DNA-damage checkpoint activation. Post-translationally, phosphorylated to form H2BS10ph during progression through meiotic prophase. May be correlated with chromosome condensation. In terms of processing, acetylated by GCN5 to form H2BK11ac and H2BK16ac. H2BK16ac can also be formed by ESA1. Acetylation of N-terminal lysines and particularly formation of H2BK11acK16ac has a positive effect on transcription. Sumoylation to form H2BK6su or H2BK7su, and probably also H2BK16su or H2BK17su, occurs preferentially near the telomeres and represses gene transcription.

The protein resides in the nucleus. It is found in the chromosome. In terms of biological role, core component of nucleosome. Nucleosomes wrap and compact DNA into chromatin, limiting DNA accessibility to the cellular machineries which require DNA as a template. Histones thereby play a central role in transcription regulation, DNA repair, DNA replication and chromosomal stability. DNA accessibility is regulated via a complex set of post-translational modifications of histones, also called histone code, and nucleosome remodeling. This Gibberella zeae (strain ATCC MYA-4620 / CBS 123657 / FGSC 9075 / NRRL 31084 / PH-1) (Wheat head blight fungus) protein is Histone H2B (HTB1).